The chain runs to 221 residues: Chaperone protein TorD (221 aa).

The protein belongs to the TorD/DmsD family. TorD subfamily.

It is found in the cytoplasm. Functionally, involved in the biogenesis of TorA. Acts on TorA before the insertion of the molybdenum cofactor and, as a result, probably favors a conformation of the apoenzyme that is competent for acquiring the cofactor. The protein is Chaperone protein TorD of Shewanella pealeana (strain ATCC 700345 / ANG-SQ1).